The sequence spans 474 residues: Glycogen synthase (474 aa).

An ADP-alpha-D-glucose-binding site is contributed by lysine 15.

Belongs to the glycosyltransferase 1 family. Bacterial/plant glycogen synthase subfamily.

The catalysed reaction is [(1-&gt;4)-alpha-D-glucosyl](n) + ADP-alpha-D-glucose = [(1-&gt;4)-alpha-D-glucosyl](n+1) + ADP + H(+). It functions in the pathway glycan biosynthesis; glycogen biosynthesis. Functionally, synthesizes alpha-1,4-glucan chains using ADP-glucose. This chain is Glycogen synthase, found in Chlamydia muridarum (strain MoPn / Nigg).